We begin with the raw amino-acid sequence, 749 residues long: Pectate disaccharide-lyase (749 aa).

Residues 1 to 26 (MKYAASGLLSVALNSLLLLGSNQRFA) form the signal peptide. Ca(2+) contacts are provided by Asp538, Asp562, Asp563, and Asp566. The active-site Proton acceptor is Lys595.

Belongs to the polysaccharide lyase 9 family. Ca(2+) serves as cofactor.

It localises to the secreted. The enzyme catalyses [(1-&gt;4)-alpha-D-galacturonosyl](n) = 4-(4-deoxy-alpha-D-galact-4-enuronosyl)-D-galacturonate + [(1-&gt;4)-alpha-D-galacturonosyl](n-2). Activity on pectate is nearly completely inhibited by ethyleneglycol-bis-(P-aminoethyl ether) N,N'-tetraacetic acid (EGTA), EDTA or nitrilotriacetic acid. Activity is specifically restored by the addition of Ca(2+). Functionally, exo-cleaving lyase that catalyzes the digestion of pectate. Contributes to pectate catabolism but not to bacterial virulence. In vitro can also use citrus pectin and highly methyl-esterified Link pectin as substrates. The polypeptide is Pectate disaccharide-lyase (Dickeya chrysanthemi (Pectobacterium chrysanthemi)).